The primary structure comprises 295 residues: Pyridoxal 5'-phosphate synthase subunit PdxS (295 aa).

Asp-25 contributes to the D-ribose 5-phosphate binding site. Lys-82 serves as the catalytic Schiff-base intermediate with D-ribose 5-phosphate. Gly-154 serves as a coordination point for D-ribose 5-phosphate. Arg-166 provides a ligand contact to D-glyceraldehyde 3-phosphate. D-ribose 5-phosphate contacts are provided by residues Gly-215 and 236–237 (GS).

The protein belongs to the PdxS/SNZ family. In terms of assembly, in the presence of PdxT, forms a dodecamer of heterodimers.

It catalyses the reaction aldehydo-D-ribose 5-phosphate + D-glyceraldehyde 3-phosphate + L-glutamine = pyridoxal 5'-phosphate + L-glutamate + phosphate + 3 H2O + H(+). Its pathway is cofactor biosynthesis; pyridoxal 5'-phosphate biosynthesis. Its function is as follows. Catalyzes the formation of pyridoxal 5'-phosphate from ribose 5-phosphate (RBP), glyceraldehyde 3-phosphate (G3P) and ammonia. The ammonia is provided by the PdxT subunit. Can also use ribulose 5-phosphate and dihydroxyacetone phosphate as substrates, resulting from enzyme-catalyzed isomerization of RBP and G3P, respectively. This is Pyridoxal 5'-phosphate synthase subunit PdxS from Listeria innocua serovar 6a (strain ATCC BAA-680 / CLIP 11262).